A 262-amino-acid chain; its full sequence is tRNA pseudouridine synthase A (262 aa).

The active-site Nucleophile is the aspartate 56. Tyrosine 114 contributes to the substrate binding site.

It belongs to the tRNA pseudouridine synthase TruA family. Homodimer.

It carries out the reaction uridine(38/39/40) in tRNA = pseudouridine(38/39/40) in tRNA. Its function is as follows. Formation of pseudouridine at positions 38, 39 and 40 in the anticodon stem and loop of transfer RNAs. The sequence is that of tRNA pseudouridine synthase A from Lactiplantibacillus plantarum (strain ATCC BAA-793 / NCIMB 8826 / WCFS1) (Lactobacillus plantarum).